A 313-amino-acid chain; its full sequence is Ribose-phosphate pyrophosphokinase (313 aa).

ATP-binding positions include Asp-37–Glu-39 and Arg-96–Gln-97. Residues His-131 and Asp-170 each coordinate Mg(2+). Lys-193 is a catalytic residue. D-ribose 5-phosphate-binding positions include Arg-195, Asp-219, and Asp-223–Thr-227.

The protein belongs to the ribose-phosphate pyrophosphokinase family. Class I subfamily. As to quaternary structure, homohexamer. Mg(2+) serves as cofactor.

Its subcellular location is the cytoplasm. The catalysed reaction is D-ribose 5-phosphate + ATP = 5-phospho-alpha-D-ribose 1-diphosphate + AMP + H(+). It participates in metabolic intermediate biosynthesis; 5-phospho-alpha-D-ribose 1-diphosphate biosynthesis; 5-phospho-alpha-D-ribose 1-diphosphate from D-ribose 5-phosphate (route I): step 1/1. In terms of biological role, involved in the biosynthesis of the central metabolite phospho-alpha-D-ribosyl-1-pyrophosphate (PRPP) via the transfer of pyrophosphoryl group from ATP to 1-hydroxyl of ribose-5-phosphate (Rib-5-P). The protein is Ribose-phosphate pyrophosphokinase of Pseudomonas aeruginosa (strain ATCC 15692 / DSM 22644 / CIP 104116 / JCM 14847 / LMG 12228 / 1C / PRS 101 / PAO1).